We begin with the raw amino-acid sequence, 163 residues long: Large ribosomal subunit protein bL19 (163 aa).

Positions 131–150 are enriched in basic and acidic residues; sequence ISQERKASGKDQASKPEVRP. The tract at residues 131–163 is disordered; the sequence is ISQERKASGKDQASKPEVRPQGKKPAPKPKAKK. The span at 151 to 163 shows a compositional bias: basic residues; the sequence is QGKKPAPKPKAKK.

Belongs to the bacterial ribosomal protein bL19 family.

In terms of biological role, this protein is located at the 30S-50S ribosomal subunit interface and may play a role in the structure and function of the aminoacyl-tRNA binding site. In Rhodospirillum rubrum (strain ATCC 11170 / ATH 1.1.1 / DSM 467 / LMG 4362 / NCIMB 8255 / S1), this protein is Large ribosomal subunit protein bL19.